Here is a 61-residue protein sequence, read N- to C-terminus: Metallothionein-2 (61 aa).

Methionine 1 carries the N-acetylmethionine modification. Residues 1–29 (MDPNCSCAAGGSCTCAGSCKCKECRCTSC) are beta. 18 residues coordinate a divalent metal cation: cysteine 5, cysteine 7, cysteine 13, cysteine 15, cysteine 19, cysteine 21, cysteine 24, cysteine 26, cysteine 29, cysteine 33, cysteine 34, cysteine 36, cysteine 37, cysteine 41, cysteine 44, cysteine 48, cysteine 50, and cysteine 57. The interval 30-61 (KKSCCSCCPVGCAKCAQGCICKGASDKCSCCA) is alpha. At serine 58 the chain carries Phosphoserine. A divalent metal cation-binding residues include cysteine 59 and cysteine 60.

This sequence belongs to the metallothionein superfamily. Type 1 family. Interacts with EOLA1.

Its function is as follows. Metallothioneins have a high content of cysteine residues that bind various heavy metals; these proteins are transcriptionally regulated by both heavy metals and glucocorticoids. The protein is Metallothionein-2 (MT2A) of Canis lupus familiaris (Dog).